We begin with the raw amino-acid sequence, 100 residues long: Urease subunit gamma (100 aa).

The protein belongs to the urease gamma subunit family. In terms of assembly, heterotrimer of UreA (gamma), UreB (beta) and UreC (alpha) subunits. Three heterotrimers associate to form the active enzyme.

Its subcellular location is the cytoplasm. It carries out the reaction urea + 2 H2O + H(+) = hydrogencarbonate + 2 NH4(+). It participates in nitrogen metabolism; urea degradation; CO(2) and NH(3) from urea (urease route): step 1/1. This chain is Urease subunit gamma, found in Rhodopseudomonas palustris (strain BisB5).